Consider the following 858-residue polypeptide: Taste receptor type 1 member 3 (858 aa).

The signal sequence occupies residues 1–20 (MPALAIMGLSLAAFLELGMG). Residues 21–572 (ASLCLSQQFK…RPKFLAWGEP (552 aa)) are Extracellular-facing. N-linked (GlcNAc...) asparagine; when associated with variant T-60 glycosylation is present at asparagine 58. Residues asparagine 85, asparagine 130, asparagine 203, asparagine 264, asparagine 379, asparagine 387, asparagine 418, asparagine 439, and asparagine 482 are each glycosylated (N-linked (GlcNAc...) asparagine). Residues 573–593 (VVLSLLLLLCLVLGLALAALG) form a helical membrane-spanning segment. Over 594 to 610 (LSVHHWDSPLVQASGGS) the chain is Cytoplasmic. The chain crosses the membrane as a helical span at residues 611-631 (QFCFGLICLGLFCLSVLLFPG). Topologically, residues 632–644 (RPSSASCLAQQPM) are extracellular. The chain crosses the membrane as a helical span at residues 645-665 (AHLPLTGCLSTLFLQAAETFV). Residues 666-687 (ESELPLSWANWLCSYLRGLWAW) lie on the Cytoplasmic side of the membrane. Residues 688 to 708 (LVVLLATFVEAALCAWYLIAF) traverse the membrane as a helical segment. Over 709–735 (PPEVVTDWSVLPTEVLEHCHVRSWVSL) the chain is Extracellular. Residues 736–756 (GLVHITNAMLAFLCFLGTFLV) form a helical membrane-spanning segment. Residues 757 to 767 (QSQPGRYNRAR) are Cytoplasmic-facing. The helical transmembrane segment at 768–788 (GLTFAMLAYFITWVSFVPLLA) threads the bilayer. At 789 to 796 (NVQVAYQP) the chain is on the extracellular side. Residues 797 to 817 (AVQMGAILVCALGILVTFHLP) traverse the membrane as a helical segment. The Cytoplasmic segment spans residues 818–858 (KCYVLLWLPKLNTQEFFLGRNAKKAADENSGGGEAAQGHNE).

This sequence belongs to the G-protein coupled receptor 3 family. TAS1R subfamily. Forms homodimers or heterodimers with TAS1R1 and TAS1R2. The Thr-60 variant is predicted to introduce a novel N-linked glycosylation site at Asn-58. The addition of even a short carbohydrate group at Asn-58 is predicted to disrupt one of the contact surfaces required for stability of a dimer. Therefore a Thr-60 variant N-glycosylated at Asn-58 is predicted to be precluded from forming homodimers or heterodimers. As to expression, expressed in circumvallate, foliate and fungiform taste papillae as well as in taste buds on the palate. Also expressed in testis. Not expressed in brain, heart, kidney, liver or spleen. The topographic distribution in various taste papillae is different from those of other T1R members.

The protein localises to the cell membrane. Functionally, putative taste receptor. TAS1R1/TAS1R3 responds to the umami taste stimulus (the taste of monosodium glutamate) and also to most of the 20 standard L-amino acids, but not to their D-enantiomers or other compounds. TAS1R2/TAS1R3 recognizes diverse natural and synthetic sweeteners. TAS1R3 is essential for the recognition and response to the disaccharide trehalose. Sequence differences within and between species can significantly influence the selectivity and specificity of taste responses. This Mus musculus (Mouse) protein is Taste receptor type 1 member 3 (Tas1r3).